The sequence spans 615 residues: RNA polymerase sigma factor RpoD (615 aa).

The tract at residues 177–215 (APTATHVGSELSQEDLDDDEDEDEEDGDDDAADDDNSID) is disordered. A compositionally biased stretch (acidic residues) spans 188 to 214 (SQEDLDDDEDEDEEDGDDDAADDDNSI). Residues 381 to 451 (MVEANLRLVI…TRSIADQART (71 aa)) are sigma-70 factor domain-2. The short motif at 405–408 (DLIQ) is the Interaction with polymerase core subunit RpoC element. The interval 460-536 (ETINKLNRIS…DTTLELPLDS (77 aa)) is sigma-70 factor domain-3. The tract at residues 549–602 (VLAGLTAREAKVLRMRFGIDMNTDHTLEEVGKQFDVTRERIRQIEAKALRKLRH) is sigma-70 factor domain-4. The H-T-H motif DNA-binding region spans 575–594 (LEEVGKQFDVTRERIRQIEA).

It belongs to the sigma-70 factor family. RpoD/SigA subfamily. In terms of assembly, interacts transiently with the RNA polymerase catalytic core.

It is found in the cytoplasm. Its function is as follows. Sigma factors are initiation factors that promote the attachment of RNA polymerase to specific initiation sites and are then released. This sigma factor is the primary sigma factor during exponential growth. The polypeptide is RNA polymerase sigma factor RpoD (Salmonella typhi).